The primary structure comprises 366 residues: Alanine racemase (366 aa).

K40 serves as the catalytic Proton acceptor; specific for D-alanine. K40 carries the N6-(pyridoxal phosphate)lysine modification. R136 provides a ligand contact to substrate. Y263 (proton acceptor; specific for L-alanine) is an active-site residue. M310 is a binding site for substrate.

Belongs to the alanine racemase family. Requires pyridoxal 5'-phosphate as cofactor.

The catalysed reaction is L-alanine = D-alanine. It functions in the pathway amino-acid biosynthesis; D-alanine biosynthesis; D-alanine from L-alanine: step 1/1. Functionally, catalyzes the interconversion of L-alanine and D-alanine. May also act on other amino acids. The chain is Alanine racemase (alr) from Streptococcus pyogenes serotype M5 (strain Manfredo).